We begin with the raw amino-acid sequence, 49 residues long: Putative metallothionein MT1DP (49 aa).

The beta stretch occupies residues Met1 to Cys29. Cys5, Cys7, Cys13, Cys15, Cys19, Cys21, Cys26, Cys29, Cys33, Cys34, Cys36, Cys37, Cys41, Cys44, and Cys48 together coordinate a divalent metal cation. The segment at Lys30–Thr49 is alpha.

Belongs to the metallothionein superfamily. Type 1 family.

Functionally, metallothioneins have a high content of cysteine residues that bind various heavy metals. In Homo sapiens (Human), this protein is Putative metallothionein MT1DP (MT1DP).